We begin with the raw amino-acid sequence, 156 residues long: MKFNDVYNKHHKIIHHLLKKYNISYNYDEYYQLLLIKMWQLSQIYKPSSKQSLSSFLFTRLNYYLIDLFRQQNQLKDVILCENNSPTLTEQPTYFNEHDLRLQDIFKLLNHRERLWLKLYLEGYKQFEIAEIMSLSLSTIKLIKMSVKRKCQHNFN.

A Polymerase core binding motif is present at residues 29–44 (EYYQLLLIKMWQLSQI). Residues 126–145 (QFEIAEIMSLSLSTIKLIKM) constitute a DNA-binding region (H-T-H motif).

Belongs to the sigma-70 factor family.

Functionally, sigma factors are initiation factors that promote the attachment of RNA polymerase to specific initiation sites and are then released. Sigma-S contributes to the protection against external stress, thus playing a role in cellular fitness and survival. This Staphylococcus aureus (strain Mu50 / ATCC 700699) protein is RNA polymerase sigma factor SigS (sigS).